Here is a 445-residue protein sequence, read N- to C-terminus: Glucose-6-phosphate isomerase (445 aa).

E287 serves as the catalytic Proton donor. Catalysis depends on residues H308 and K422.

Belongs to the GPI family.

The protein resides in the cytoplasm. It catalyses the reaction alpha-D-glucose 6-phosphate = beta-D-fructose 6-phosphate. It participates in carbohydrate biosynthesis; gluconeogenesis. Its pathway is carbohydrate degradation; glycolysis; D-glyceraldehyde 3-phosphate and glycerone phosphate from D-glucose: step 2/4. Its function is as follows. Catalyzes the reversible isomerization of glucose-6-phosphate to fructose-6-phosphate. In Bacteroides fragilis (strain ATCC 25285 / DSM 2151 / CCUG 4856 / JCM 11019 / LMG 10263 / NCTC 9343 / Onslow / VPI 2553 / EN-2), this protein is Glucose-6-phosphate isomerase.